Here is a 155-residue protein sequence, read N- to C-terminus: Xanthine-guanine phosphoribosyltransferase 2 (155 aa).

5-phospho-alpha-D-ribose 1-diphosphate-binding positions include 37 to 38 and 91 to 99; these read RG and DDLVDTGNT. Residue Asp-92 participates in Mg(2+) binding. 2 residues coordinate guanine: Asp-95 and Ile-138. The xanthine site is built by Asp-95 and Ile-138. Residues 95 to 99 and 137 to 138 each bind GMP; these read DTGNT and WI.

This sequence belongs to the purine/pyrimidine phosphoribosyltransferase family. XGPT subfamily. As to quaternary structure, homotetramer. Requires Mg(2+) as cofactor.

Its subcellular location is the cell inner membrane. The enzyme catalyses GMP + diphosphate = guanine + 5-phospho-alpha-D-ribose 1-diphosphate. The catalysed reaction is XMP + diphosphate = xanthine + 5-phospho-alpha-D-ribose 1-diphosphate. It carries out the reaction IMP + diphosphate = hypoxanthine + 5-phospho-alpha-D-ribose 1-diphosphate. It functions in the pathway purine metabolism; GMP biosynthesis via salvage pathway; GMP from guanine: step 1/1. Its pathway is purine metabolism; XMP biosynthesis via salvage pathway; XMP from xanthine: step 1/1. Functionally, purine salvage pathway enzyme that catalyzes the transfer of the ribosyl-5-phosphate group from 5-phospho-alpha-D-ribose 1-diphosphate (PRPP) to the N9 position of the 6-oxopurines guanine and xanthine to form the corresponding ribonucleotides GMP (guanosine 5'-monophosphate) and XMP (xanthosine 5'-monophosphate), with the release of PPi. To a lesser extent, also acts on hypoxanthine. The chain is Xanthine-guanine phosphoribosyltransferase 2 from Haemophilus influenzae (strain 86-028NP).